The following is a 32-amino-acid chain: Photosystem II reaction center protein T (32 aa).

Residues 3 to 23 (ALVYVFLLIGTLMIIFFAIFF) form a helical membrane-spanning segment.

Belongs to the PsbT family. In terms of assembly, PSII is composed of 1 copy each of membrane proteins PsbA, PsbB, PsbC, PsbD, PsbE, PsbF, PsbH, PsbI, PsbJ, PsbK, PsbL, PsbM, PsbT, PsbY, PsbZ, Psb30/Ycf12, at least 3 peripheral proteins of the oxygen-evolving complex and a large number of cofactors. It forms dimeric complexes.

The protein resides in the plastid. It localises to the chloroplast thylakoid membrane. Its function is as follows. Found at the monomer-monomer interface of the photosystem II (PS II) dimer, plays a role in assembly and dimerization of PSII. PSII is a light-driven water plastoquinone oxidoreductase, using light energy to abstract electrons from H(2)O, generating a proton gradient subsequently used for ATP formation. The chain is Photosystem II reaction center protein T from Cyanidioschyzon merolae (strain NIES-3377 / 10D) (Unicellular red alga).